Here is a 401-residue protein sequence, read N- to C-terminus: Aspartokinase (401 aa).

This sequence belongs to the aspartokinase family.

The catalysed reaction is L-aspartate + ATP = 4-phospho-L-aspartate + ADP. Its pathway is amino-acid biosynthesis; L-lysine biosynthesis via DAP pathway; (S)-tetrahydrodipicolinate from L-aspartate: step 1/4. It functions in the pathway amino-acid biosynthesis; L-methionine biosynthesis via de novo pathway; L-homoserine from L-aspartate: step 1/3. The protein operates within amino-acid biosynthesis; L-threonine biosynthesis; L-threonine from L-aspartate: step 1/5. The sequence is that of Aspartokinase (lysC) from Rickettsia felis (strain ATCC VR-1525 / URRWXCal2) (Rickettsia azadi).